We begin with the raw amino-acid sequence, 138 residues long: ATP synthase epsilon chain (138 aa).

Belongs to the ATPase epsilon chain family. As to quaternary structure, F-type ATPases have 2 components, CF(1) - the catalytic core - and CF(0) - the membrane proton channel. CF(1) has five subunits: alpha(3), beta(3), gamma(1), delta(1), epsilon(1). CF(0) has three main subunits: a, b and c.

The protein localises to the cell inner membrane. Its function is as follows. Produces ATP from ADP in the presence of a proton gradient across the membrane. This Bartonella henselae (strain ATCC 49882 / DSM 28221 / CCUG 30454 / Houston 1) (Rochalimaea henselae) protein is ATP synthase epsilon chain.